We begin with the raw amino-acid sequence, 396 residues long: Growth-regulating factor 1 (396 aa).

The QLQ domain maps to 18 to 53 (PFTASQWQELEHQALIYKYMASGTPIPSDLILPLRR). Short sequence motifs (bipartite nuclear localization signal) lie at residues 86-105 (RKAE…KKWR) and 123-130 (RGKNRSRK). The 45-residue stretch at 90–134 (DPEPGRCRRTDGKKWRCSKEAYPDSKYCEKHMHRGKNRSRKPVEM) folds into the WRC domain. The segment at 117 to 176 (CEKHMHRGKNRSRKPVEMSLATPPPPSSSATSAASNSSAGVAPTTTTTSSPAPSYSRPAP) is disordered. Residues 120–129 (HMHRGKNRSR) are compositionally biased toward basic residues. The span at 144 to 174 (SSATSAASNSSAGVAPTTTTTSSPAPSYSRP) shows a compositional bias: low complexity.

The protein belongs to the GRF family. In terms of tissue distribution, highly expressed in the intercalary meristem of the internode and in the shoot apex. Detected in the leaf primordia and emerging leaves in the uppermost node. Preferentially localized in the epidermis and in the tissues surrounding vascular bundles of the intercalary meristem of the internode and in adventitious roots of the second highest node. Low expression in the coleoptile and in the youngest leaf.

The protein localises to the nucleus. Transcription activator that plays a regulatory role in gibberellin-induced stem elongation. The sequence is that of Growth-regulating factor 1 (GRF1) from Oryza sativa subsp. indica (Rice).